Reading from the N-terminus, the 77-residue chain is Large ribosomal subunit protein bL28 (77 aa).

The interval 1-21 (MARVCKVTGKRPMTGNNVSHA) is disordered.

This sequence belongs to the bacterial ribosomal protein bL28 family.

The sequence is that of Large ribosomal subunit protein bL28 from Chromobacterium violaceum (strain ATCC 12472 / DSM 30191 / JCM 1249 / CCUG 213 / NBRC 12614 / NCIMB 9131 / NCTC 9757 / MK).